A 370-amino-acid polypeptide reads, in one-letter code: GTPase Obg (370 aa).

An Obg domain is found at 1 to 159; sequence MKFIDEARIE…RKLKLELKVL (159 aa). The interval 129–148 is disordered; sequence HFKSSTNRAPRQKTNGKSGE. Residues 130 to 145 show a composition bias toward polar residues; that stretch reads FKSSTNRAPRQKTNGK. Residues 160 to 334 form the OBG-type G domain; that stretch reads ADVGLLGMPN…LCYSLQDYLD (175 aa). GTP contacts are provided by residues 166–173, 191–195, 213–216, 284–287, and 315–317; these read GMPNAGKS, FTTLH, DIPG, NKVD, and SAL. Residues Ser-173 and Thr-193 each contribute to the Mg(2+) site.

The protein belongs to the TRAFAC class OBG-HflX-like GTPase superfamily. OBG GTPase family. As to quaternary structure, monomer. Mg(2+) is required as a cofactor.

It localises to the cytoplasm. Functionally, an essential GTPase which binds GTP, GDP and possibly (p)ppGpp with moderate affinity, with high nucleotide exchange rates and a fairly low GTP hydrolysis rate. Plays a role in control of the cell cycle, stress response, ribosome biogenesis and in those bacteria that undergo differentiation, in morphogenesis control. This chain is GTPase Obg, found in Polynucleobacter necessarius subsp. necessarius (strain STIR1).